The primary structure comprises 65 residues: Large ribosomal subunit protein bL35 (65 aa).

A disordered region spans residues 30-65 (AFRSHLAQNKSTKQKRQSKHGTFMHPTDYKRLKDLM). Residues 56 to 65 (TDYKRLKDLM) are compositionally biased toward basic and acidic residues.

The protein belongs to the bacterial ribosomal protein bL35 family.

The polypeptide is Large ribosomal subunit protein bL35 (Mycoplasma mobile (strain ATCC 43663 / 163K / NCTC 11711) (Mesomycoplasma mobile)).